The chain runs to 511 residues: S-layer protein B (511 aa).

An N-terminal signal peptide occupies residues methionine 1–glycine 24. Positions isoleucine 358–glutamate 392 form a coiled coil. The chain crosses the membrane as a helical span at residues glycine 487–phenylalanine 507.

The protein belongs to the Sulfolobales SlaB family. The mushroom-shaped unit cells of the Sulfolobales' S-layers may consist of three SlaB subunits and six SlaA subunits.

It is found in the secreted. It localises to the cell wall. The protein localises to the S-layer. The protein resides in the cell membrane. In terms of biological role, S-layer small protein. May anchor the complex to the cell membrane. In Acidianus ambivalens (Desulfurolobus ambivalens), this protein is S-layer protein B.